A 389-amino-acid polypeptide reads, in one-letter code: Sterol methyltransferase-like 2 (389 aa).

A helical membrane pass occupies residues 25–45; that stretch reads LSWKGAVGLVAATGIGYVLII.

This sequence belongs to the class I-like SAM-binding methyltransferase superfamily. Erg6/SMT family.

The protein localises to the microsome membrane. In terms of biological role, unable to convert squalene, botryococcene, cycloartenol, zymosterol or lanosterol to mono-, di-, tri- or tetramethylated derivatives. This chain is Sterol methyltransferase-like 2 (SMT-2), found in Botryococcus braunii (Green alga).